The following is an 874-amino-acid chain: Alanine--tRNA ligase (874 aa).

Residues histidine 564, histidine 568, cysteine 665, and histidine 669 each coordinate Zn(2+).

The protein belongs to the class-II aminoacyl-tRNA synthetase family. It depends on Zn(2+) as a cofactor.

It is found in the cytoplasm. The catalysed reaction is tRNA(Ala) + L-alanine + ATP = L-alanyl-tRNA(Ala) + AMP + diphosphate. Functionally, catalyzes the attachment of alanine to tRNA(Ala) in a two-step reaction: alanine is first activated by ATP to form Ala-AMP and then transferred to the acceptor end of tRNA(Ala). Also edits incorrectly charged Ser-tRNA(Ala) and Gly-tRNA(Ala) via its editing domain. The chain is Alanine--tRNA ligase from Burkholderia lata (strain ATCC 17760 / DSM 23089 / LMG 22485 / NCIMB 9086 / R18194 / 383).